The following is a 275-amino-acid chain: Ammonia transport outward protein 3 (275 aa).

Residues 1 to 84 lie on the Extracellular side of the membrane; it reads MTSSASSPQD…NCAKYTPHQF (84 aa). Serine 4 carries the post-translational modification Phosphoserine. Residues 85 to 105 form a helical membrane-spanning segment; sequence ANPVPLGLASFSLSCLVLSLI. Over 106-120 the chain is Cytoplasmic; that stretch reads NANVRGVTDGKWALS. A helical membrane pass occupies residues 121–141; the sequence is LFMFFGGAIELFAGLLCFVIG. The Extracellular segment spans residues 142–181; the sequence is DTYAMTVFSSFGGFWICYGYGLTDTDNLVSGYTDPTMLNN. A helical membrane pass occupies residues 182–202; it reads VIGFFLAGWTVFTFLMLMCTL. At 203-207 the chain is on the cytoplasmic side; it reads KSTWG. The chain crosses the membrane as a helical span at residues 208–228; sequence LFLLLTFLDLTFLLLCIGTFI. Over 229-236 the chain is Extracellular; the sequence is DNNNLKMA. Residues 237–257 traverse the membrane as a helical segment; sequence GGYFGILSSCCGWYSLYCSVV. Over 258–275 the chain is Cytoplasmic; it reads SPSNSYLAFRAHTMPNAP.

It belongs to the acetate uptake transporter (AceTr) (TC 2.A.96) family.

The protein localises to the cell membrane. Its function is as follows. Transporter protein required for ammonia export. Induced in rho(0) cells, probably to eliminate the excess ammonia that arises because of a potential defect in ammonia assimilation in those cells. In Saccharomyces cerevisiae (strain ATCC 204508 / S288c) (Baker's yeast), this protein is Ammonia transport outward protein 3 (ATO3).